Here is a 379-residue protein sequence, read N- to C-terminus: UDP-4-amino-4-deoxy-L-arabinose--oxoglutarate aminotransferase (379 aa).

At K182 the chain carries N6-(pyridoxal phosphate)lysine.

This sequence belongs to the DegT/DnrJ/EryC1 family. ArnB subfamily. In terms of assembly, homodimer. Pyridoxal 5'-phosphate is required as a cofactor.

The catalysed reaction is UDP-4-amino-4-deoxy-beta-L-arabinose + 2-oxoglutarate = UDP-beta-L-threo-pentopyranos-4-ulose + L-glutamate. The protein operates within nucleotide-sugar biosynthesis; UDP-4-deoxy-4-formamido-beta-L-arabinose biosynthesis; UDP-4-deoxy-4-formamido-beta-L-arabinose from UDP-alpha-D-glucuronate: step 2/3. Its pathway is bacterial outer membrane biogenesis; lipopolysaccharide biosynthesis. Catalyzes the conversion of UDP-4-keto-arabinose (UDP-Ara4O) to UDP-4-amino-4-deoxy-L-arabinose (UDP-L-Ara4N). The modified arabinose is attached to lipid A and is required for resistance to polymyxin and cationic antimicrobial peptides. This is UDP-4-amino-4-deoxy-L-arabinose--oxoglutarate aminotransferase from Salmonella dublin (strain CT_02021853).